Consider the following 377-residue polypeptide: Nitric oxide reductase FlRd-NAD(+) reductase (377 aa).

The protein belongs to the FAD-dependent oxidoreductase family. The cofactor is FAD.

The protein resides in the cytoplasm. The catalysed reaction is 2 reduced [nitric oxide reductase rubredoxin domain] + NAD(+) + H(+) = 2 oxidized [nitric oxide reductase rubredoxin domain] + NADH. It participates in nitrogen metabolism; nitric oxide reduction. Functionally, one of at least two accessory proteins for anaerobic nitric oxide (NO) reductase. Reduces the rubredoxin moiety of NO reductase. The sequence is that of Nitric oxide reductase FlRd-NAD(+) reductase from Salmonella dublin (strain CT_02021853).